The following is a 506-amino-acid chain: 2,3-bisphosphoglycerate-independent phosphoglycerate mutase (506 aa).

Positions 9 and 59 each coordinate Mn(2+). The active-site Phosphoserine intermediate is serine 59. Substrate is bound by residues histidine 120, arginine 149–aspartate 150, arginine 181, arginine 187, arginine 254–arginine 257, and lysine 327. Mn(2+) is bound by residues aspartate 394, histidine 398, aspartate 435, histidine 436, and histidine 452.

Belongs to the BPG-independent phosphoglycerate mutase family. It depends on Mn(2+) as a cofactor.

It carries out the reaction (2R)-2-phosphoglycerate = (2R)-3-phosphoglycerate. It functions in the pathway carbohydrate degradation; glycolysis; pyruvate from D-glyceraldehyde 3-phosphate: step 3/5. Functionally, catalyzes the interconversion of 2-phosphoglycerate and 3-phosphoglycerate. This Natronomonas pharaonis (strain ATCC 35678 / DSM 2160 / CIP 103997 / JCM 8858 / NBRC 14720 / NCIMB 2260 / Gabara) (Halobacterium pharaonis) protein is 2,3-bisphosphoglycerate-independent phosphoglycerate mutase.